The primary structure comprises 515 residues: Arabinose import ATP-binding protein AraG 2 (515 aa).

The interval 1–22 (MTMQTMTAASGHDAEAGTPPDG) is disordered. ABC transporter domains follow at residues 25–260 (LALD…MVGR) and 260–511 (RSIE…LIKL). 57-64 (GENGAGKS) lines the ATP pocket.

The protein belongs to the ABC transporter superfamily. Arabinose importer (TC 3.A.1.2.2) family. As to quaternary structure, the complex is composed of two ATP-binding proteins (AraG), two transmembrane proteins (AraH) and a solute-binding protein (AraF).

The protein localises to the cell inner membrane. The catalysed reaction is L-arabinose(out) + ATP + H2O = L-arabinose(in) + ADP + phosphate + H(+). Its function is as follows. Part of the ABC transporter complex AraFGH involved in arabinose import. Responsible for energy coupling to the transport system. This chain is Arabinose import ATP-binding protein AraG 2, found in Burkholderia cenocepacia (strain HI2424).